Consider the following 486-residue polypeptide: MAQLNQNFIDTITQELPAHLSMDDFIAACDRPLRRSIRVNTLKISADDFKTLMQPKGWTFDPIPWCKDGFWISYDEEEQLGNALEHIQGLFYIQEASSMLPPTALFTPSAFTPSAKWQCVLDLASAPGSKTTQIAALMHNSGLLIANEYSASRVKVLHANVLRMGASHCALTHFDGRVFGEYLYESFDAVLIDAPCGGEGTVRKDADALKHWSLNDVLAISETQKALIESAFLALKPGGSLVYSTCTLNRLENQGVCEYLKQTYGDAVQFESLSDLFEGAERATTPEGFLHVWPQIYDSEGFFVAKLTKTASVPRLQPEPTLQKNFPFTPATTKQAQGIKDYFQQDLGISLPDDLIMVRDDEFWLFPHEFRDFIGRMRFQRIGIKLADSTKHGFKVRHEAIIALAGKQLSPTAKTVDLSDVEAKEYLMGRDISLNTAVKAQGEVIVCYGGAPLGMAKHLGNRLKNNLPRDLVKDKVLLLSEQIKSL.

S-adenosyl-L-methionine is bound by residues 124–130, Glu148, Asp175, and Asp193; that span reads ASAPGSK. The active-site Nucleophile is the Cys246.

This sequence belongs to the class I-like SAM-binding methyltransferase superfamily. RsmB/NOP family.

The protein localises to the cytoplasm. The catalysed reaction is cytidine(1407) in 16S rRNA + S-adenosyl-L-methionine = 5-methylcytidine(1407) in 16S rRNA + S-adenosyl-L-homocysteine + H(+). Functionally, specifically methylates the cytosine at position 1407 (m5C1407) of 16S rRNA. The chain is Ribosomal RNA small subunit methyltransferase F from Shewanella putrefaciens (strain CN-32 / ATCC BAA-453).